Reading from the N-terminus, the 156-residue chain is Aspercryptin biosynthesis cluster protein B (156 aa).

Residues M1–P39 form the signal peptide.

It belongs to the YciI family.

It functions in the pathway secondary metabolite biosynthesis. Functionally, part of the gene cluster that mediates the biosynthesis of aspercryptins, linear lipopeptides built from six amino acids including 2 highly unusual and nonproteogenic amino acids, 2-amino-octanoic acid (2aoa) and 2-amino-dodecanol (2adol). The core structure of aspercryptins is as follows: Ser/Ala-Thr-Ile/Val-2aoa-Aasn-2adol. The first step of aspercryptin biosynthesis is the generation of the fatty acid precursors, octanoic and dodecanoic acids, by the FAS subunits atnF and atnM. The fatty acid precursors are likely transformed into the corresponding alpha-amino fatty acids in three steps. First, they are hydroxylated by the cytochrome P450 monooxygenase atnE, then oxidized to the corresponding alpha-keto acids by the NAD(P)-dependent oxidoreductase atnD, and finally converted to the alpha-amino fatty acids by the PLP-dependent aminotransferases atnH or atnJ. the alpha-amino fatty acids, 2-amino-octanoic and 2-amino-dodecanoic acids, are recognized, activated, and covalently tethered to the NRPS atnA by its fourth and sixth adenylation domains. The second module of atnA is the Thr module and contains an epimerase (E) domain responsible for the epimerization of Thr to D-allo-Thr. Additionally, despite atnA having only one epimerase domain, the first amino acid of aspercryptin A1 is D-Ser, suggesting that serine is either loaded directly as D-Ser on the first module or that the epimerase domain in the threonine module epimerizes both L-Ser and L-Thr. After condensation of the hexapeptide of aspercryptin, the C-terminal reductase (TE) domain might be involved in the reductive release and production of the aldehyde hexapeptide. Further reduction would generate aspercryptins. The variety of aspercryptins produced reflects the flexibility of the atnA NRPS, allowing incorporation of alanine instead of serine, valine for isoleucine, and a C10 fatty amino alcohol instead of the C12 version. AtnB seems to be involved in the selectivity for Ile versus Val by the third module. Moreover, type B, C and D aspercryptins have an additional N-terminal cichorine, acetyl and propionyl group respectively. The sequence is that of Aspercryptin biosynthesis cluster protein B from Emericella nidulans (strain FGSC A4 / ATCC 38163 / CBS 112.46 / NRRL 194 / M139) (Aspergillus nidulans).